A 2114-amino-acid chain; its full sequence is Protein CELLULOSE SYNTHASE INTERACTIVE 2 (2114 aa).

42 ARM repeats span residues 2–42 (TSEM…LLGL), 46–87 (KKEC…VLCK), 89–128 (KNVR…EVSL), 135–177 (NVGT…NLCG), 180–219 (DGFW…RLIR), 222–262 (TSSI…AITS), 265–305 (EEAI…SYGT), 354–394 (GDTR…SLFG), 396–435 (VDLS…NLCK), 479–519 (EESR…NLCC), 522–561 (EEIR…KLIK), 563–595 (ADPS…HVLA), 601–640 (EFVT…DLFS), 643–682 (KDLC…SLSN), 708–750 (AKTN…RVLR), 774–816 (SDVF…LLAK), 825–865 (HNPF…RFCK), 870–910 (LLGR…CAAK), 914–953 (TLWA…IQRP), 994–1033 (PSNR…KWIA), 1044–1083 (PKVV…ALVR), 1087–1128 (DKTI…LVQN), 1141–1182 (ERVR…RIAD), 1185–1225 (DLSK…SLFR), 1227–1264 (PEIT…LCEL), 1265–1304 (FSSE…ALVK), 1312–1353 (RPDI…FLFT), 1355–1394 (EGLR…RLLD), 1396–1435 (KRFV…KMAK), 1454–1494 (ISQL…MVQP), 1496–1525 (LLIL…KPMV), 1526–1564 (LESL…SLLE), 1566–1605 (QRFQ…RSSV), 1606–1648 (TWPK…NILR), 1650–1689 (NPEH…ENQD), 1690–1730 (SSSV…RNPK), 1732–1771 (RETK…DISQ), 1772–1813 (HEGL…NFAM), 1816–1855 (RTSR…SLFS), 1857–1898 (HTLQ…TILT), 1901–1940 (PKLR…TLRQ), and 1949–1993 (TARS…CLPG). A C2 domain is found at 1974–2087 (SPAPSSFHER…LSEGSYSGIF (114 aa)).

As to quaternary structure, associates with cellulase synthase (CESA) complexes. Binds to cortical microtubules.

The protein localises to the cell membrane. Its subcellular location is the cytoplasm. The protein resides in the cytoskeleton. Regulator of the microtubular cytoskeleton. Microtubule-associated protein involved in the association of cellulase synthase (CESA) complexes (CSCs) and cortical microtubules. Promotes dynamics of CSCs in the plasma membrane. Regulates primary cell wall biosynthesis and cellulose microfibrils organization. In Arabidopsis thaliana (Mouse-ear cress), this protein is Protein CELLULOSE SYNTHASE INTERACTIVE 2.